The sequence spans 669 residues: MSIKFRTVITTAGAAKLAAATAPGRRKVGITTMAVGDGGGKLPVPDAGQTGLIHEVWRHALNKISQDKRNSNYIIAELVIPPEVGGFWMRELGLYDDAGTLIAVANMAESYKPALAEGSGRWQTCRMVIIVSSVASVELTIDTTTVMATQDYVDDKIAEHEQSRRHPDASLTAKGFTQLSSATNSTSETLAATPKAVKAAYDLANGKYTAQDATTARKGLVQLSSATNSTSETLAATPKAVKTVMDETNKKAPLNSPALTGTPTTPTARQGTNNTQIANTAFVMAAIAALVDSSPDALNTLNELAAALGNDPNFATTMTNALAGKQPKDATLTALAGLATAADRFPYFTGNDVASLATLTKVGRDILAKSTVAAVIEYLGLQETVNRAGNAVQKNGDTLSGGLTFENDSILAWIRNTDWAKIGFKNDADGDTDSYMWFETGDNGNEYFKWRSRQSTTTKDLMTLKWDALNILVNAVINGCFGVGTTNALGGSSIVLGDNDTGFKQNGDGILDVYANSQRVFRFQNGVAIAFKNIQAGDSKKFSLSSSNTSTKNITFNLWGASTRPVVAELGDEAGWHFYSQRNTDNSVIFAVNGQMQPSNWGNFDSRYVKDVRLGTRVVQLMARGGRYEKAGHTITGLRIIGEVDGDDEAIFRPIQKYINGTWYNVAQV.

Positions K251 to T272 are disordered.

Belongs to the tail fiber family.

It is found in the virion. This Escherichia phage P2 (Bacteriophage P2) protein is Probable tail fiber protein (H).